A 524-amino-acid polypeptide reads, in one-letter code: mRNA cap guanine-N(7) methyltransferase (524 aa).

The interval 1–155 (MSDKEAGVAS…DKKRAHDEAE (155 aa)) is disordered. Residues 19–40 (NKDEVDVKNTEEHSKQESKSDI) are compositionally biased toward basic and acidic residues. Residues 68 to 77 (NNKVISSVYN) are compositionally biased toward polar residues. Residues 90-99 (KTTDKYDKYG) show a composition bias toward basic and acidic residues. The span at 100 to 112 (SRSTPIATPTAPV) shows a compositional bias: polar residues. An mRNA cap 0 methyltransferase domain is found at 214 to 522 (SPIYKLRNFN…FYIGFVFEKL (309 aa)). Residue 223–224 (NN) participates in mRNA binding. 6 residues coordinate S-adenosyl-L-methionine: Lys-227, Cys-251, Asp-273, Asp-319, Gln-349, and Tyr-354.

The protein belongs to the class I-like SAM-binding methyltransferase superfamily. mRNA cap 0 methyltransferase family.

The protein resides in the nucleus. The catalysed reaction is a 5'-end (5'-triphosphoguanosine)-ribonucleoside in mRNA + S-adenosyl-L-methionine = a 5'-end (N(7)-methyl 5'-triphosphoguanosine)-ribonucleoside in mRNA + S-adenosyl-L-homocysteine. In terms of biological role, responsible for methylating the 5'-cap structure of mRNAs. The protein is mRNA cap guanine-N(7) methyltransferase (ABD1) of Debaryomyces hansenii (strain ATCC 36239 / CBS 767 / BCRC 21394 / JCM 1990 / NBRC 0083 / IGC 2968) (Yeast).